We begin with the raw amino-acid sequence, 147 residues long: Holo-[acyl-carrier-protein] synthase (147 aa).

Mg(2+)-binding residues include aspartate 7 and glutamate 60.

This sequence belongs to the P-Pant transferase superfamily. AcpS family. It depends on Mg(2+) as a cofactor.

The protein resides in the cytoplasm. It carries out the reaction apo-[ACP] + CoA = holo-[ACP] + adenosine 3',5'-bisphosphate + H(+). Functionally, transfers the 4'-phosphopantetheine moiety from coenzyme A to a Ser of acyl-carrier-protein. This chain is Holo-[acyl-carrier-protein] synthase, found in Bifidobacterium animalis subsp. lactis (strain AD011).